Here is a 239-residue protein sequence, read N- to C-terminus: MICOS complex subunit mic25a (239 aa).

The N-myristoyl glycine moiety is linked to residue Gly2. Disordered regions lie at residues 27-88 (VKLS…KKRY) and 113-133 (DISRAVQRERAQTRQESERAK). Residues 50-78 (NKENQGHQTRTPSTSDAQAPKTQAKTTFP) are compositionally biased toward polar residues. The segment covering 79 to 88 (DSKEELKKRY) has biased composition (basic and acidic residues). The stretch at 79–166 (DSKEELKKRY…ITQLEKKNEE (88 aa)) forms a coiled coil. Positions 192–234 (EPVCLNLQAQILNCYRENREQTLQCSDLAKEYMQCINAAKKNL) constitute a CHCH domain. Short sequence motifs (cx9C motif) lie at residues 195-205 (CLNLQAQILNC) and 216-226 (CSDLAKEYMQC). 2 cysteine pairs are disulfide-bonded: Cys195–Cys226 and Cys205–Cys216.

This sequence belongs to the MICOS complex subunit Mic19 family. Metazoan Mic25 subfamily. Component of the mitochondrial contact site and cristae organizing system (MICOS) complex (also known as MINOS or MitOS complex).

Its subcellular location is the mitochondrion inner membrane. Component of the MICOS complex, a large protein complex of the mitochondrial inner membrane that plays crucial roles in the maintenance of crista junctions, inner membrane architecture, and formation of contact sites to the outer membrane. The sequence is that of MICOS complex subunit mic25a (chchd6a) from Danio rerio (Zebrafish).